The sequence spans 541 residues: Arginine--tRNA ligase (541 aa).

Positions 119 to 129 (ANPTGPLHIGH) match the 'HIGH' region motif.

The protein belongs to the class-I aminoacyl-tRNA synthetase family. In terms of assembly, monomer.

It localises to the cytoplasm. The catalysed reaction is tRNA(Arg) + L-arginine + ATP = L-arginyl-tRNA(Arg) + AMP + diphosphate. This Helicobacter pylori (strain ATCC 700392 / 26695) (Campylobacter pylori) protein is Arginine--tRNA ligase (argS).